Reading from the N-terminus, the 183-residue chain is Apo-citrate lyase phosphoribosyl-dephospho-CoA transferase (183 aa).

It belongs to the CitX family.

It carries out the reaction apo-[citrate lyase ACP] + 2'-(5''-triphospho-alpha-D-ribosyl)-3'-dephospho-CoA = holo-[citrate lyase ACP] + diphosphate. Its function is as follows. Transfers 2-(5''-triphosphoribosyl)-3'-dephosphocoenzyme-A on a serine residue to the apo-acyl carrier protein (gamma chain) of the citrate lyase to yield holo-acyl carrier protein. This Escherichia coli O6:K15:H31 (strain 536 / UPEC) protein is Apo-citrate lyase phosphoribosyl-dephospho-CoA transferase.